The following is a 648-amino-acid chain: MTEINIEFPDGSVKPFEQGVSILDIAKSISTSLAKKAVAGKINGALVRLDQAINENVKIEIVTKDSEDGNIVNWNSAALVLTSAIESIYPGVHFGEIGNGEHGFYVDTDKVDQQISVDQLPAIEDKMKDIIKSKISLKHSEISVEEALASVDGDPYQAKIVKRNEKNGKVSVYDVDGKIIVSDNVALLSTSDMKAVKLLSVAGAYWEGKSSNPMLQRIYGTSFYKQKDLEAELERQKEAHERDHRVIGNNLDLFFVDPKVGAGLPYWMPNGATIRRSIERYIIDKEVKHGYQHVYTPVLMNLDAYKTSGHWQHYREDMFPPMDMGDGEMLELRPMNCPSHIQVYKHHIRSYRELPIRIAELGMMHRYEKSGALSGLQRVREMTLNDGHTFVAPDQIQAEFKKVLQLMVEVYRDFNITDYTFRLSYRDPANTEKYFDDDEMWNKSQSMLKAAMDDLGLDYVEAEGEAAFYGPKLDVQTKTALGNEETLSTIQLDFMLPKQFDLHYVGADGEEHRPVMIHRGLVSTMERFTAYLIEMYKGAFPTWLAPKQVTIIPVKDDLHGAYADKLREEMVDKDIRVEVDHRNEKMGYKIREAQTQKIPYILVVGDNELENNSVSVRHYGEDDSKNEASADFINNIVREIESYSREND.

In terms of domain architecture, TGS spans 1-63 (MTEINIEFPD…NENVKIEIVT (63 aa)). Residues 243–541 (DHRVIGNNLD…LIEMYKGAFP (299 aa)) are catalytic. Residues cysteine 337, histidine 388, and histidine 518 each contribute to the Zn(2+) site.

It belongs to the class-II aminoacyl-tRNA synthetase family. As to quaternary structure, homodimer. Requires Zn(2+) as cofactor.

Its subcellular location is the cytoplasm. It carries out the reaction tRNA(Thr) + L-threonine + ATP = L-threonyl-tRNA(Thr) + AMP + diphosphate + H(+). In terms of biological role, catalyzes the attachment of threonine to tRNA(Thr) in a two-step reaction: L-threonine is first activated by ATP to form Thr-AMP and then transferred to the acceptor end of tRNA(Thr). Also edits incorrectly charged L-seryl-tRNA(Thr). The sequence is that of Threonine--tRNA ligase from Pediococcus pentosaceus (strain ATCC 25745 / CCUG 21536 / LMG 10740 / 183-1w).